The sequence spans 296 residues: Homoserine kinase (296 aa).

Position 85–95 (85–95 (PLSRGLGSSAA)) interacts with ATP.

Belongs to the GHMP kinase family. Homoserine kinase subfamily.

It localises to the cytoplasm. The enzyme catalyses L-homoserine + ATP = O-phospho-L-homoserine + ADP + H(+). Its pathway is amino-acid biosynthesis; L-threonine biosynthesis; L-threonine from L-aspartate: step 4/5. In terms of biological role, catalyzes the ATP-dependent phosphorylation of L-homoserine to L-homoserine phosphate. The sequence is that of Homoserine kinase from Clostridium acetobutylicum (strain ATCC 824 / DSM 792 / JCM 1419 / IAM 19013 / LMG 5710 / NBRC 13948 / NRRL B-527 / VKM B-1787 / 2291 / W).